Consider the following 135-residue polypeptide: uncharacterized protein (135 aa).

A run of 3 helical transmembrane segments spans residues 12–32 (IPIL…YNGI), 68–88 (SMIG…AKFC), and 98–118 (GILY…FYLF).

Its subcellular location is the cell membrane. This is an uncharacterized protein from Methanocaldococcus jannaschii (strain ATCC 43067 / DSM 2661 / JAL-1 / JCM 10045 / NBRC 100440) (Methanococcus jannaschii).